Consider the following 512-residue polypeptide: MADTVRKKQKLVVVGAGPVGSLAALYAAARGDEVEIYELRGDLRDPSTVPLNFTKSINLALSERGITAMRHSNREDLINNVLRGTIPMHGRMIHGRDRGQLWEAAQAYDVHGRAINAVDRSTLNNALLDELECTPNVKLFFNHKLTGADFNARKAWFERRVPGEAPLPNSANRVPEIEVDFDFMIGADGAHSAARYHMMKFARVDYQQEYIDTLWCEFRIPPTEDGDFRISPNHLHIWPGGEFMFIALPSADKSFTCTLFAPAAHYKHLGSSPQNLVESFKDHFPGVCPELISPGDLQEQFATNPHLPLISLKCKPHHYNSSIVIVGDAAHAVLPFYGQGLNAGLEDIRVLFEFLDKHGSYNLDASPDARREARAKAFQAYTDQRCADTHAINDLSKQNYLEMRWGVKTPLYKLRKSVEEALDRYVPRLGWQTQYSRVSFSNQRYSEVIQSARWQGRILGLGLATTLISTVGVIAYVFWKKPRQHSPGGLLRYSWRRLSSIWVSMFRTIAYA.

Belongs to the aromatic-ring hydroxylase family. KMO subfamily. The cofactor is FAD.

Its subcellular location is the mitochondrion outer membrane. It catalyses the reaction L-kynurenine + NADPH + O2 + H(+) = 3-hydroxy-L-kynurenine + NADP(+) + H2O. It functions in the pathway cofactor biosynthesis; NAD(+) biosynthesis; quinolinate from L-kynurenine: step 1/3. In terms of biological role, catalyzes the hydroxylation of L-kynurenine (L-Kyn) to form 3-hydroxy-L-kynurenine (L-3OHKyn). Required for synthesis of quinolinic acid. In Neosartorya fischeri (strain ATCC 1020 / DSM 3700 / CBS 544.65 / FGSC A1164 / JCM 1740 / NRRL 181 / WB 181) (Aspergillus fischerianus), this protein is Kynurenine 3-monooxygenase (bna4).